Consider the following 379-residue polypeptide: Lipid-A-disaccharide synthase (379 aa).

This sequence belongs to the LpxB family.

It catalyses the reaction a lipid X + a UDP-2-N,3-O-bis[(3R)-3-hydroxyacyl]-alpha-D-glucosamine = a lipid A disaccharide + UDP + H(+). Its pathway is bacterial outer membrane biogenesis; LPS lipid A biosynthesis. Its function is as follows. Condensation of UDP-2,3-diacylglucosamine and 2,3-diacylglucosamine-1-phosphate to form lipid A disaccharide, a precursor of lipid A, a phosphorylated glycolipid that anchors the lipopolysaccharide to the outer membrane of the cell. This is Lipid-A-disaccharide synthase from Aeromonas hydrophila subsp. hydrophila (strain ATCC 7966 / DSM 30187 / BCRC 13018 / CCUG 14551 / JCM 1027 / KCTC 2358 / NCIMB 9240 / NCTC 8049).